We begin with the raw amino-acid sequence, 376 residues long: Probable sister chromatid cohesion protein DCC1 (376 aa).

A disordered region spans residues 213 to 232 (QKSPTNSGGGGEEIKGGGGD). The segment covering 219 to 232 (SGGGGEEIKGGGGD) has biased composition (gly residues).

The protein belongs to the DCC1 family.

It localises to the nucleus. Loads PCNA onto primed templates regulating velocity, spacing and restart activity of replication forks. May couple DNA replication to sister chromatid cohesion. This is Probable sister chromatid cohesion protein DCC1 from Dictyostelium discoideum (Social amoeba).